A 149-amino-acid polypeptide reads, in one-letter code: MQVVLRQAIPGLGKPGEIVNVKPGYARNYLFPRQMAVRVTPGILKEQQVRLEQEAARKLAERQQAENYKTALETIGRFVIRKKVGEHDLLFGQVTTSDIAEVVLATSGLDIDRRNILLNEEIKKTGVYPVQVKLHPEVTATLRIQVTPE.

The protein belongs to the bacterial ribosomal protein bL9 family.

Its function is as follows. Binds to the 23S rRNA. This chain is Large ribosomal subunit protein bL9, found in Synechococcus sp. (strain JA-2-3B'a(2-13)) (Cyanobacteria bacterium Yellowstone B-Prime).